A 282-amino-acid chain; its full sequence is Bis(5'-nucleosyl)-tetraphosphatase, symmetrical (282 aa).

It belongs to the Ap4A hydrolase family.

The enzyme catalyses P(1),P(4)-bis(5'-adenosyl) tetraphosphate + H2O = 2 ADP + 2 H(+). Functionally, hydrolyzes diadenosine 5',5'''-P1,P4-tetraphosphate to yield ADP. The polypeptide is Bis(5'-nucleosyl)-tetraphosphatase, symmetrical (Salmonella paratyphi A (strain ATCC 9150 / SARB42)).